Consider the following 270-residue polypeptide: Gap junction beta-3 protein (270 aa).

Over Met1–Phe20 the chain is Cytoplasmic. The chain crosses the membrane as a helical span at residues Gly21–Ala40. Topologically, residues Glu41–Arg75 are extracellular. The helical transmembrane segment at Leu76–Arg98 threads the bilayer. Residues Glu99–Gly126 are Cytoplasmic-facing. A helical membrane pass occupies residues Leu127–Leu149. The Extracellular portion of the chain corresponds to His150–Thr188. The helical transmembrane segment at Tyr189–Phe211 threads the bilayer. At His212–Ile270 the chain is on the cytoplasmic side. The disordered stretch occupies residues Leu246–Ile270.

The protein belongs to the connexin family. Beta-type (group I) subfamily. As to quaternary structure, a connexon is composed of a hexamer of connexins. Interacts with CNST.

Its subcellular location is the cell membrane. The protein localises to the cell junction. It is found in the gap junction. Functionally, one gap junction consists of a cluster of closely packed pairs of transmembrane channels, the connexons, through which materials of low MW diffuse from one cell to a neighboring cell. This chain is Gap junction beta-3 protein (Gjb3), found in Mus musculus (Mouse).